Reading from the N-terminus, the 314-residue chain is GTP cyclohydrolase FolE2 (314 aa).

The interval 290 to 314 is disordered; sequence DASAWSAPQASAPDQQESFATGNER. Positions 291-305 are enriched in low complexity; the sequence is ASAWSAPQASAPDQQ.

Belongs to the GTP cyclohydrolase IV family.

It catalyses the reaction GTP + H2O = 7,8-dihydroneopterin 3'-triphosphate + formate + H(+). It functions in the pathway cofactor biosynthesis; 7,8-dihydroneopterin triphosphate biosynthesis; 7,8-dihydroneopterin triphosphate from GTP: step 1/1. Its function is as follows. Converts GTP to 7,8-dihydroneopterin triphosphate. This chain is GTP cyclohydrolase FolE2, found in Pseudomonas putida (strain ATCC 700007 / DSM 6899 / JCM 31910 / BCRC 17059 / LMG 24140 / F1).